A 324-amino-acid chain; its full sequence is Carbonic anhydrase 15 (324 aa).

The signal sequence occupies residues 1-18 (MWALDFLLSFLLIQLAAQ). Residues 23–293 (GTWCYDSQDP…LGGRRISASP (271 aa)) form the Alpha-carbonic anhydrase domain. The active-site Proton acceptor is histidine 90. Histidine 122, histidine 124, and histidine 147 together coordinate Zn(2+). The active site involves tyrosine 155. Asparagine 184, asparagine 194, and asparagine 203 each carry an N-linked (GlcNAc...) asparagine glycan. 231 to 232 (TT) is a binding site for substrate. Positions 269 to 290 (LHPRPLTSNFRPQQPLGGRRIS) are disordered.

Belongs to the alpha-carbonic anhydrase family. Zn(2+) serves as cofactor.

It localises to the secreted. It carries out the reaction hydrogencarbonate + H(+) = CO2 + H2O. Its activity is regulated as follows. Repressed by coumarins. Reversible hydration of carbon dioxide. This is Carbonic anhydrase 15 (Ca15) from Mus musculus (Mouse).